The primary structure comprises 184 residues: Photosystem I assembly protein Ycf4 (184 aa).

The next 2 helical transmembrane spans lie at 22-42 (FCWA…GTSS) and 57-77 (ILFF…LFIS).

Belongs to the Ycf4 family.

The protein resides in the plastid. It localises to the chloroplast thylakoid membrane. In terms of biological role, seems to be required for the assembly of the photosystem I complex. In Chloranthus spicatus (Chulantree), this protein is Photosystem I assembly protein Ycf4.